Consider the following 248-residue polypeptide: 2,3-bisphosphoglycerate-dependent phosphoglycerate mutase (248 aa).

Substrate contacts are provided by residues 8-15 (RHGESEWN), 21-22 (TG), Arg-60, 87-90 (ERHY), Lys-98, 114-115 (RR), and 183-184 (GN). The active-site Tele-phosphohistidine intermediate is His-9. Catalysis depends on Glu-87, which acts as the Proton donor/acceptor.

The protein belongs to the phosphoglycerate mutase family. BPG-dependent PGAM subfamily.

It carries out the reaction (2R)-2-phosphoglycerate = (2R)-3-phosphoglycerate. The protein operates within carbohydrate degradation; glycolysis; pyruvate from D-glyceraldehyde 3-phosphate: step 3/5. Functionally, catalyzes the interconversion of 2-phosphoglycerate and 3-phosphoglycerate. This chain is 2,3-bisphosphoglycerate-dependent phosphoglycerate mutase, found in Borrelia turicatae (strain 91E135).